The primary structure comprises 139 residues: Putative nickel-responsive regulator (139 aa).

The Ni(2+) site is built by His79, His90, His92, and Cys98.

Belongs to the transcriptional regulatory CopG/NikR family. It depends on Ni(2+) as a cofactor.

Transcriptional regulator. In Lawsonia intracellularis (strain PHE/MN1-00), this protein is Putative nickel-responsive regulator.